Consider the following 276-residue polypeptide: NADPH-dependent 7-cyano-7-deazaguanine reductase (276 aa).

Substrate is bound at residue 83-85 (IES). 85-86 (SK) contributes to the NADPH binding site. Residue Cys184 is the Thioimide intermediate of the active site. Asp191 serves as the catalytic Proton donor. 223-224 (HE) provides a ligand contact to substrate. An NADPH-binding site is contributed by 252–253 (RG).

The protein belongs to the GTP cyclohydrolase I family. QueF type 2 subfamily. In terms of assembly, homodimer.

The protein localises to the cytoplasm. The catalysed reaction is 7-aminomethyl-7-carbaguanine + 2 NADP(+) = 7-cyano-7-deazaguanine + 2 NADPH + 3 H(+). The protein operates within tRNA modification; tRNA-queuosine biosynthesis. Functionally, catalyzes the NADPH-dependent reduction of 7-cyano-7-deazaguanine (preQ0) to 7-aminomethyl-7-deazaguanine (preQ1). In Pseudomonas fluorescens (strain Pf0-1), this protein is NADPH-dependent 7-cyano-7-deazaguanine reductase.